We begin with the raw amino-acid sequence, 140 residues long: Acyl-coenzyme A thioesterase 13 (140 aa).

An N-acetylmethionine modification is found at M1. Residues K27, K37, and K43 each carry the N6-acetyllysine modification. CoA is bound at residue E46. Substrate contacts are provided by N50 and G81. CoA contacts are provided by residues S83, 90–95 (YMSPAK), and 108–113 (KQGKTL). K108 and K127 each carry N6-acetyllysine. Residue H137 coordinates CoA.

It belongs to the thioesterase PaaI family. As to quaternary structure, homotetramer. Interacts with PCTP. In terms of tissue distribution, highly expressed in the kidney and moderately in the heart, liver, brain, small and large intestine. Also expressed in brown adipose tissue.

The protein resides in the cytoplasm. It localises to the cytosol. Its subcellular location is the mitochondrion. It is found in the nucleus. The protein localises to the cytoskeleton. The protein resides in the spindle. The catalysed reaction is a fatty acyl-CoA + H2O = a fatty acid + CoA + H(+). It catalyses the reaction decanoyl-CoA + H2O = decanoate + CoA + H(+). The enzyme catalyses octanoyl-CoA + H2O = octanoate + CoA + H(+). It carries out the reaction butanoyl-CoA + H2O = butanoate + CoA + H(+). The catalysed reaction is hexanoyl-CoA + H2O = hexanoate + CoA + H(+). It catalyses the reaction tetradecanoyl-CoA + H2O = tetradecanoate + CoA + H(+). The enzyme catalyses hexadecanoyl-CoA + H2O = hexadecanoate + CoA + H(+). It carries out the reaction dodecanoyl-CoA + H2O = dodecanoate + CoA + H(+). The catalysed reaction is (9Z)-octadecenoyl-CoA + H2O = (9Z)-octadecenoate + CoA + H(+). Catalyzes the hydrolysis of acyl-CoAs into free fatty acids and coenzyme A (CoASH), regulating their respective intracellular levels. Has acyl-CoA thioesterase activity towards medium (C12) and long-chain (C18) fatty acyl-CoA substrates. Can also hydrolyze 3-hydroxyphenylacetyl-CoA and 3,4-dihydroxyphenylacetyl-CoA (in vitro). May play a role in controlling adaptive thermogenesis. The protein is Acyl-coenzyme A thioesterase 13 of Mus musculus (Mouse).